A 454-amino-acid chain; its full sequence is Inactive tetrahydroanabasine acetyltransferase pauper allele (454 aa).

This sequence belongs to the plant acyltransferase family. In terms of assembly, monomer.

The chain is Inactive tetrahydroanabasine acetyltransferase pauper allele from Lupinus albus (White lupine).